A 540-amino-acid polypeptide reads, in one-letter code: Phenylalanine--tRNA ligase beta subunit (540 aa).

Residues 268-342 (LRHTSVPFSL…MAYGYDRFTL (75 aa)) form the B5 domain. Asp-320, Asp-326, Glu-329, and Asp-330 together coordinate Mg(2+).

This sequence belongs to the phenylalanyl-tRNA synthetase beta subunit family. Type 2 subfamily. Tetramer of two alpha and two beta subunits. It depends on Mg(2+) as a cofactor.

It localises to the cytoplasm. The catalysed reaction is tRNA(Phe) + L-phenylalanine + ATP = L-phenylalanyl-tRNA(Phe) + AMP + diphosphate + H(+). This Metallosphaera sedula (strain ATCC 51363 / DSM 5348 / JCM 9185 / NBRC 15509 / TH2) protein is Phenylalanine--tRNA ligase beta subunit.